Here is a 206-residue protein sequence, read N- to C-terminus: Ras-related protein Rab-18 (206 aa).

N-acetylmethionine is present on methionine 1. Residues serine 17, glycine 20, lysine 21, serine 22, serine 23, aspartate 34, proline 35, threonine 40, glycine 66, lysine 123, and aspartate 125 each coordinate GTP. Serine 22 provides a ligand contact to Mg(2+). Short sequence motifs (switch) lie at residues 31–45 and 63–80; these read DTFDPELAATIGVDF and DTAGQERFRTLTPSYYRG. Residue threonine 40 participates in Mg(2+) binding. Serine 144 carries the phosphoserine modification. Alanine 152 lines the GTP pocket. A lipid anchor (S-palmitoyl cysteine) is attached at cysteine 199. Residue cysteine 203 is modified to Cysteine methyl ester. The S-geranylgeranyl cysteine moiety is linked to residue cysteine 203. Positions 204-206 are cleaved as a propeptide — removed in mature form; that stretch reads SVL.

The protein belongs to the small GTPase superfamily. Rab family. As to quaternary structure, interacts (in GTP-bound form) with ZFYVE1. Interacts with ZW10 and this interaction is enhanced in the presence of ZFYVE1. Interacts with BSCL2. It depends on Mg(2+) as a cofactor.

It localises to the endoplasmic reticulum membrane. Its subcellular location is the golgi apparatus. The protein resides in the cis-Golgi network membrane. The protein localises to the lipid droplet. It is found in the apical cell membrane. It carries out the reaction GTP + H2O = GDP + phosphate + H(+). Regulated by guanine nucleotide exchange factors (GEFs) which promote the exchange of bound GDP for free GTP. Regulated by GTPase activating proteins (GAPs) which increase the GTP hydrolysis activity at the ER membrane. Inhibited by GDP dissociation inhibitors (GDIs) which prevent Rab-GDP dissociation. In terms of biological role, the small GTPases Rab are key regulators of intracellular membrane trafficking, from the formation of transport vesicles to their fusion with membranes. Rabs cycle between an inactive GDP-bound form and an active GTP-bound form that is able to recruit to membranes different sets of downstream effectors directly responsible for vesicle formation, movement, tethering and fusion. RAB18 is required for the localization of ZFYVE1 to lipid droplets and for its function in mediating the formation of endoplasmic reticulum-lipid droplets (ER-LD) contacts. Also required for maintaining endoplasmic reticulum structure. Plays a role in apical endocytosis/recycling. Plays a key role in eye and brain development and neurodegeneration. The protein is Ras-related protein Rab-18 of Rattus norvegicus (Rat).